Consider the following 295-residue polypeptide: NAD kinase (295 aa).

The active-site Proton acceptor is the D72. NAD(+)-binding positions include 72–73 (DG), 146–147 (ND), R157, K174, D176, 187–192 (TAYALS), and Q247.

The protein belongs to the NAD kinase family. A divalent metal cation is required as a cofactor.

It is found in the cytoplasm. The enzyme catalyses NAD(+) + ATP = ADP + NADP(+) + H(+). Its function is as follows. Involved in the regulation of the intracellular balance of NAD and NADP, and is a key enzyme in the biosynthesis of NADP. Catalyzes specifically the phosphorylation on 2'-hydroxyl of the adenosine moiety of NAD to yield NADP. In Pseudomonas aeruginosa (strain LESB58), this protein is NAD kinase.